The chain runs to 122 residues: Photosystem II extrinsic protein U (122 aa).

The signal sequence occupies residues 1–30 (MRWLLSILVRVVLVLCLCFAPLGIPVVARA).

The protein belongs to the PsbU family. In terms of assembly, PSII is composed of 1 copy each of membrane proteins PsbA, PsbB, PsbC, PsbD, PsbE, PsbF, PsbH, PsbI, PsbJ, PsbK, PsbL, PsbM, PsbT, PsbX, PsbY, PsbZ, Psb30/Ycf12, peripheral proteins PsbO, CyanoQ (PsbQ), PsbU, PsbV and a large number of cofactors. It forms dimeric complexes.

The protein resides in the cellular thylakoid membrane. In terms of biological role, one of the extrinsic, lumenal subunits of photosystem II (PSII). PSII is a light-driven water plastoquinone oxidoreductase, using light energy to abstract electrons from H(2)O, generating a proton gradient subsequently used for ATP formation. The extrinsic proteins stabilize the structure of photosystem II oxygen-evolving complex (OEC), the ion environment of oxygen evolution and protect the OEC against heat-induced inactivation. The protein is Photosystem II extrinsic protein U of Synechococcus sp. (strain JA-2-3B'a(2-13)) (Cyanobacteria bacterium Yellowstone B-Prime).